We begin with the raw amino-acid sequence, 444 residues long: MGNSLRCISQEQDPNQKKPSSVVNGNSSEKHVRRLSLIPSFRRRTLLPSLSCSGSSTSSTSKKGGIKTKKKIRERHHQEQHHHDHEKDSLIQDQTLAATNILFSQTPRNSNSAPPFRRSTSVVYTQPPTAAVAASVGSVSGALTPKKSTYGYVRSSSNRQRSSTDPVLKPNQLLDKELKVEGAETKRFVLVHGGGFGAWCWYKTITLLEKHGFQVDAVDLTGSGVSSFDTNNITSLAQYVKPLLHFFDTLKPTEKVILVGHDFGGACMSYAMEMYPSKIAKAIFISAAMLANAQSTLDLFNQQPDSNYDLMEQVHLFLYANGKKNPPTAVDFDRSLLRDFFFNQSPPKDVALASVSMRPIPFAPVVEKLHVSEKNYGSIRRFYIKTMEDDYAVPVSLQDAMIKSNPPEQVFHLKGSDHAPFFSRPQSLNRILVEISQLPPKKSS.

Residues 1–27 show a composition bias toward polar residues; the sequence is MGNSLRCISQEQDPNQKKPSSVVNGNS. Disordered regions lie at residues 1-36 and 48-91; these read MGNSLRCISQEQDPNQKKPSSVVNGNSSEKHVRRLS and PSLS…DSLI. The transit peptide at 1 to 58 directs the protein to the chloroplast; that stretch reads MGNSLRCISQEQDPNQKKPSSVVNGNSSEKHVRRLSLIPSFRRRTLLPSLSCSGSSTS. Residues 53-63 are compositionally biased toward low complexity; sequence SGSSTSSTSKK. Residues 64-80 show a composition bias toward basic residues; the sequence is GGIKTKKKIRERHHQEQ. Over residues 81 to 90 the composition is skewed to basic and acidic residues; sequence HHHDHEKDSL. Residues 188–312 enclose the AB hydrolase-1 domain; that stretch reads FVLVHGGGFG…QPDSNYDLME (125 aa). Residue D262 is the Acyl-ester intermediate of the active site. Active-site charge relay system residues include D390 and H418.

This sequence belongs to the AB hydrolase superfamily. Methylesterase family.

The protein resides in the plastid. It localises to the chloroplast. Functionally, putative methylesterase. The chain is Putative methylesterase 15, chloroplastic from Arabidopsis thaliana (Mouse-ear cress).